Reading from the N-terminus, the 876-residue chain is Alanine--tRNA ligase (876 aa).

Residues His-560, His-564, Cys-662, and His-666 each coordinate Zn(2+).

The protein belongs to the class-II aminoacyl-tRNA synthetase family. Requires Zn(2+) as cofactor.

It is found in the cytoplasm. It carries out the reaction tRNA(Ala) + L-alanine + ATP = L-alanyl-tRNA(Ala) + AMP + diphosphate. Catalyzes the attachment of alanine to tRNA(Ala) in a two-step reaction: alanine is first activated by ATP to form Ala-AMP and then transferred to the acceptor end of tRNA(Ala). Also edits incorrectly charged Ser-tRNA(Ala) and Gly-tRNA(Ala) via its editing domain. This chain is Alanine--tRNA ligase, found in Synechococcus elongatus (strain ATCC 33912 / PCC 7942 / FACHB-805) (Anacystis nidulans R2).